Consider the following 809-residue polypeptide: Lon protease (809 aa).

The Lon N-terminal domain maps to 20–216 (LPLLALRDVV…ELMNYLMNQS (197 aa)). ATP is bound at residue 369 to 376 (GPPGVGKT). The region spanning 606-787 (EAQVGRVNGL…DEILPLALTS (182 aa)) is the Lon proteolytic domain. Active-site residues include serine 693 and lysine 736.

It belongs to the peptidase S16 family. In terms of assembly, homohexamer. Organized in a ring with a central cavity.

The protein resides in the cytoplasm. It carries out the reaction Hydrolysis of proteins in presence of ATP.. Functionally, ATP-dependent serine protease that mediates the selective degradation of mutant and abnormal proteins as well as certain short-lived regulatory proteins. Required for cellular homeostasis and for survival from DNA damage and developmental changes induced by stress. Degrades polypeptides processively to yield small peptide fragments that are 5 to 10 amino acids long. Binds to DNA in a double-stranded, site-specific manner. In Acinetobacter baumannii (strain AB307-0294), this protein is Lon protease.